The following is a 588-amino-acid chain: Proline--tRNA ligase (588 aa).

This sequence belongs to the class-II aminoacyl-tRNA synthetase family. ProS type 1 subfamily. As to quaternary structure, homodimer.

It is found in the cytoplasm. It catalyses the reaction tRNA(Pro) + L-proline + ATP = L-prolyl-tRNA(Pro) + AMP + diphosphate. Its function is as follows. Catalyzes the attachment of proline to tRNA(Pro) in a two-step reaction: proline is first activated by ATP to form Pro-AMP and then transferred to the acceptor end of tRNA(Pro). As ProRS can inadvertently accommodate and process non-cognate amino acids such as alanine and cysteine, to avoid such errors it has two additional distinct editing activities against alanine. One activity is designated as 'pretransfer' editing and involves the tRNA(Pro)-independent hydrolysis of activated Ala-AMP. The other activity is designated 'posttransfer' editing and involves deacylation of mischarged Ala-tRNA(Pro). The misacylated Cys-tRNA(Pro) is not edited by ProRS. This Corynebacterium glutamicum (strain R) protein is Proline--tRNA ligase.